The primary structure comprises 412 residues: GTPase Obg (412 aa).

One can recognise an Obg domain in the interval 1–159 (MKFLDQAKIF…RWIWLRLKMI (159 aa)). One can recognise an OBG-type G domain in the interval 160 to 327 (ADAGLVGLPN…ILARLFTHIR (168 aa)). GTP-binding positions include 166–173 (GLPNAGKS), 191–195 (FTTLH), 212–215 (DIPG), 279–282 (NKCD), and 308–310 (SGV). Mg(2+) is bound by residues S173 and T193. The tract at residues 335–412 (AVPAASPIFG…ADDEEDDAEE (78 aa)) is disordered. The segment covering 385–412 (NDGDEVDEDYDDEDLEEVADDEEDDAEE) has biased composition (acidic residues).

It belongs to the TRAFAC class OBG-HflX-like GTPase superfamily. OBG GTPase family. As to quaternary structure, monomer. The cofactor is Mg(2+).

The protein resides in the cytoplasm. Its function is as follows. An essential GTPase which binds GTP, GDP and possibly (p)ppGpp with moderate affinity, with high nucleotide exchange rates and a fairly low GTP hydrolysis rate. Plays a role in control of the cell cycle, stress response, ribosome biogenesis and in those bacteria that undergo differentiation, in morphogenesis control. In Paramagnetospirillum magneticum (strain ATCC 700264 / AMB-1) (Magnetospirillum magneticum), this protein is GTPase Obg.